The chain runs to 429 residues: Trigger factor (429 aa).

In terms of domain architecture, PPIase FKBP-type spans 161–246 (GDRLSIDFKG…INEVALPKEP (86 aa)).

The protein belongs to the FKBP-type PPIase family. Tig subfamily.

Its subcellular location is the cytoplasm. The catalysed reaction is [protein]-peptidylproline (omega=180) = [protein]-peptidylproline (omega=0). Functionally, involved in protein export. Acts as a chaperone by maintaining the newly synthesized protein in an open conformation. Functions as a peptidyl-prolyl cis-trans isomerase. The polypeptide is Trigger factor (Ruthia magnifica subsp. Calyptogena magnifica).